A 660-amino-acid chain; its full sequence is Translation factor GUF1, mitochondrial (660 aa).

A mitochondrion-targeting transit peptide spans 1–42; the sequence is MRSCVRTASSVLQSWRAHTVLRNGCPLPSRTLERLPRLARSY. Residues 62–242 enclose the tr-type G domain; the sequence is ERYRNFCIVA…AVVEKIPAPV (181 aa). Residues 71-78, 135-139, and 189-192 each bind GTP; these read AHVDHGKS, DTPGH, and NKVD.

This sequence belongs to the TRAFAC class translation factor GTPase superfamily. Classic translation factor GTPase family. LepA subfamily.

Its subcellular location is the mitochondrion inner membrane. It carries out the reaction GTP + H2O = GDP + phosphate + H(+). Its function is as follows. Promotes mitochondrial protein synthesis. May act as a fidelity factor of the translation reaction, by catalyzing a one-codon backward translocation of tRNAs on improperly translocated ribosomes. Binds to mitochondrial ribosomes in a GTP-dependent manner. The polypeptide is Translation factor GUF1, mitochondrial (Phaeosphaeria nodorum (strain SN15 / ATCC MYA-4574 / FGSC 10173) (Glume blotch fungus)).